The sequence spans 488 residues: Integrin beta-like protein 1 (488 aa).

The N-terminal stretch at 1-21 is a signal peptide; it reads MHAGAFINFVWALSLVSLLAA. 40 disulfide bridges follow: C38/C65, C49/C63, C57/C68, C70/C83, C85/C106, C90/C104, C98/C109, C111/C120, C126/C153, C137/C151, C145/C156, C158/C172, C174/C196, C179/C194, C188/C199, C201/C210, C214/C241, C225/C239, C233/C244, C246/C263, C265/C290, C270/C288, C282/C293, C295/C304, C310/C337, C321/C335, C329/C340, C342/C355, C357/C378, C362/C376, C370/C381, C383/C392, C398/C425, C409/C423, C417/C428, C430/C442, C444/C465, C449/C463, C457/C468, and C470/C479. 10 consecutive I-EGF domains span residues 38 to 84, 85 to 121, 126 to 173, 174 to 211, 214 to 264, 265 to 305, 310 to 356, 357 to 393, 398 to 443, and 444 to 480; these read CRLP…PLCE, CHDW…EACQ, CDLT…KYCE, CDDT…DKCE, CDIT…DTCE, CDER…RKCE, CALS…KNCE, CDDR…KLCQ, CNMT…EFCE, and CDDR…NACE. The stretch at 49-89 is one I repeat; it reads CRTPDGSICSGRGSCDCGICLCEVKEAGKYYGPLCECHDWV. Positions 49-488 are cysteine-rich tandem repeats; that stretch reads CRTPDGSICS…CEIWLGSEYP (440 aa). An II repeat occupies 90–136; it reads CHTYDGQVCAGHGQCDCGVCKCDVGWSGEACQYPTTCDLTRKKSNEM. The stretch at 137–178 is one III repeat; it reads CKNSQAVICSNAGTCQCGRCKCENSDNSGLIYGKYCECDDTE. An IV repeat occupies 179-224; sequence CFDDETQEICGGHGKCYCGNCYCEAGWHGDKCEFQCDITPWEIKKR. The stretch at 225-269 is one V repeat; it reads CTSPDGKICSNRGTCVCGECTCHDVDPTGDWGDIHGDTCECDERN. A VI repeat occupies 270-320; the sequence is CKSVYDRYSDDFCSGHGQCNCGRCDCKDGWTGRKCEHPRACALSIEESKKK. One copy of the VII repeat lies at 321 to 361; the sequence is CQGSASQPCSGRGKCECGQCTCFPPGDSKVYGKNCECDDRQ. One copy of the VIII repeat lies at 362-408; that stretch reads CEDLEGKICGEHGTCSCGRCICEAGWFGKLCQHERKCNMTEEESKSQ. N399 is a glycosylation site (N-linked (GlcNAc...) asparagine). The stretch at 409 to 448 is one IX repeat; it reads CESDDGILCSGKGSCHCGKCICSPQEWYVSGEFCECDDRD. The X repeat unit spans residues 449-488; that stretch reads CDKHDGLICTGNGICNCGNCECWEGWNGNACEIWLGSEYP.

It is found in the secreted. This is Integrin beta-like protein 1 (itgbl1) from Xenopus laevis (African clawed frog).